We begin with the raw amino-acid sequence, 379 residues long: Heterogeneous nuclear ribonucleoprotein A3 (379 aa).

M1 is subject to N-acetylmethionine. Residues M1–P10 are compositionally biased toward pro residues. Residues M1–L34 form a disordered region. K4 is covalently cross-linked (Glycyl lysine isopeptide (Lys-Gly) (interchain with G-Cter in SUMO2)). S14 bears the Phosphoserine mark. Basic and acidic residues predominate over residues R21 to L34. The 84-residue stretch at R35–K118 folds into the RRM 1 domain. Residue K36 forms a Glycyl lysine isopeptide (Lys-Gly) (interchain with G-Cter in SUMO2) linkage. S43 is modified (phosphoserine). R52 is modified (dimethylated arginine; alternate). R52 is modified (omega-N-methylarginine; alternate). Omega-N-methylarginine is present on R76. A phosphoserine mark is found at S112 and S116. A Glycyl lysine isopeptide (Lys-Gly) (interchain with G-Cter in SUMO2) cross-link involves residue K118. The residue at position 124 (T124) is a Phosphothreonine. Residues K126–Q205 form the RRM 2 domain. K134 is subject to N6-acetyllysine; alternate. A Glycyl lysine isopeptide (Lys-Gly) (interchain with G-Cter in SUMO2); alternate cross-link involves residue K134. Residues K151 and K182 each participate in a glycyl lysine isopeptide (Lys-Gly) (interchain with G-Cter in SUMO2) cross-link. The tract at residues K204–G225 is disordered. Residues R214, R216, R226, R239, and R246 each carry the omega-N-methylarginine; alternate modification. Asymmetric dimethylarginine; alternate occurs at positions 214, 216, 226, 239, and 246. Residues R214 to G225 show a composition bias toward gly residues. At R257 the chain carries Omega-N-methylarginine. Position 286 is an asymmetric dimethylarginine (R286). A disordered region spans residues N335–F379. Over residues M347–F379 the composition is skewed to gly residues. S351 is modified (phosphoserine). The residue at position 355 (R355) is an Omega-N-methylarginine. S359 is modified (phosphoserine). Y361 and Y365 each carry phosphotyrosine. Residues S367 and S371 each carry the phosphoserine modification. Y374 bears the Phosphotyrosine mark. Position 376 is a phosphoserine (S376).

As to quaternary structure, identified in the spliceosome C complex.

It localises to the nucleus. Functionally, plays a role in cytoplasmic trafficking of RNA. Binds to the cis-acting response element, A2RE. May be involved in pre-mRNA splicing. This chain is Heterogeneous nuclear ribonucleoprotein A3 (Hnrnpa3), found in Mus musculus (Mouse).